Reading from the N-terminus, the 110-residue chain is Large ribosomal subunit protein uL22 (110 aa).

It belongs to the universal ribosomal protein uL22 family. Part of the 50S ribosomal subunit.

Its function is as follows. This protein binds specifically to 23S rRNA; its binding is stimulated by other ribosomal proteins, e.g. L4, L17, and L20. It is important during the early stages of 50S assembly. It makes multiple contacts with different domains of the 23S rRNA in the assembled 50S subunit and ribosome. In terms of biological role, the globular domain of the protein is located near the polypeptide exit tunnel on the outside of the subunit, while an extended beta-hairpin is found that lines the wall of the exit tunnel in the center of the 70S ribosome. In Nitrosomonas eutropha (strain DSM 101675 / C91 / Nm57), this protein is Large ribosomal subunit protein uL22.